The primary structure comprises 162 residues: Phosphopantetheine adenylyltransferase (162 aa).

Position 11 (S11) interacts with substrate. ATP-binding positions include 11 to 12 (SF) and H19. 3 residues coordinate substrate: K43, V76, and R90. ATP-binding positions include 91–93 (GLR), E101, and 126–132 (HLYISSS).

Belongs to the bacterial CoaD family. In terms of assembly, homohexamer. Requires Mg(2+) as cofactor.

It localises to the cytoplasm. It catalyses the reaction (R)-4'-phosphopantetheine + ATP + H(+) = 3'-dephospho-CoA + diphosphate. It functions in the pathway cofactor biosynthesis; coenzyme A biosynthesis; CoA from (R)-pantothenate: step 4/5. Its activity is regulated as follows. Is inhibited by a series of cycloalkyl pyrimidines, which also show suppression of bacterial growth. Its function is as follows. Reversibly transfers an adenylyl group from ATP to 4'-phosphopantetheine, yielding dephospho-CoA (dPCoA) and pyrophosphate. In Streptococcus pneumoniae (strain ATCC BAA-255 / R6), this protein is Phosphopantetheine adenylyltransferase.